Here is a 212-residue protein sequence, read N- to C-terminus: Ribosomal RNA large subunit methyltransferase E (212 aa).

A compositionally biased stretch (basic residues) spans 1–10; it reads MATCRRRRRG. A disordered region spans residues 1-24; that stretch reads MATCRRRRRGCNSQARRSRHESDP. Residues glycine 66, tryptophan 68, aspartate 86, aspartate 102, and aspartate 127 each contribute to the S-adenosyl-L-methionine site. Catalysis depends on lysine 167, which acts as the Proton acceptor.

It belongs to the class I-like SAM-binding methyltransferase superfamily. RNA methyltransferase RlmE family.

Its subcellular location is the cytoplasm. The enzyme catalyses uridine(2552) in 23S rRNA + S-adenosyl-L-methionine = 2'-O-methyluridine(2552) in 23S rRNA + S-adenosyl-L-homocysteine + H(+). Specifically methylates the uridine in position 2552 of 23S rRNA at the 2'-O position of the ribose in the fully assembled 50S ribosomal subunit. This is Ribosomal RNA large subunit methyltransferase E from Halorhodospira halophila (strain DSM 244 / SL1) (Ectothiorhodospira halophila (strain DSM 244 / SL1)).